Consider the following 129-residue polypeptide: L-ectoine synthase (129 aa).

The protein belongs to the ectoine synthase family.

The catalysed reaction is (2S)-4-acetamido-2-aminobutanoate = L-ectoine + H2O. It participates in amine and polyamine biosynthesis; ectoine biosynthesis; L-ectoine from L-aspartate 4-semialdehyde: step 3/3. Its function is as follows. Catalyzes the circularization of gamma-N-acetyl-alpha,gamma-diaminobutyric acid (ADABA) to ectoine (1,4,5,6-tetrahydro-2-methyl-4-pyrimidine carboxylic acid), which is an excellent osmoprotectant. This Desulfosudis oleivorans (strain DSM 6200 / JCM 39069 / Hxd3) (Desulfococcus oleovorans) protein is L-ectoine synthase.